The chain runs to 289 residues: Aquaporin PIP2-3 (289 aa).

A disordered region spans residues 1–25 (MAKQDIEASGPEAGEFSAKDYTDPP). 2 helical membrane-spanning segments follow: residues 43 to 63 (AVIAEFIATLLFLYITVATVI) and 80 to 100 (CGGVGILGIAWAFGGMIFILV). An NPA 1 motif is present at residues 112-114 (NPA). 3 consecutive transmembrane segments (helical) span residues 131–151 (LLYIIAQCLGAICGVGLVKGF), 173–193 (GTGLAAEIIGTFVLVYTVFSA), and 207–227 (VLAPLPIGFAVFMVHLATIPI). Residues 233 to 235 (NPA) carry the NPA 2 motif. Residues 255–275 (IFWVGPLIGAAIAAAYHQYVL) form a helical membrane-spanning segment.

It belongs to the MIP/aquaporin (TC 1.A.8) family. PIP (TC 1.A.8.11) subfamily.

It is found in the cell membrane. Aquaporins facilitate the transport of water and small neutral solutes across cell membranes. This is Aquaporin PIP2-3 (PIP2-3) from Zea mays (Maize).